Reading from the N-terminus, the 224-residue chain is CMRF35-like molecule 6 (224 aa).

The N-terminal stretch at 1-20 (MTARAWASWRSSALLLLLVP) is a signal peptide. The Extracellular portion of the chain corresponds to 21–183 (GYFPLSHPMT…HPGSLFSNVR (163 aa)). One can recognise an Ig-like V-type domain in the interval 22-130 (YFPLSHPMTV…HDPIVEVEVS (109 aa)). 2 disulfides stabilise this stretch: C43–C110 and C57–C65. 2 N-linked (GlcNAc...) asparagine glycosylation sites follow: N90 and N99. Residues 136 to 151 (TTTASSPQSSMGTSGP) are compositionally biased toward polar residues. The disordered stretch occupies residues 136-174 (TTTASSPQSSMGTSGPPTKLPVHTWPSVTRKDSPEPSPH). The chain crosses the membrane as a helical span at residues 184 to 204 (FLLLVLLELPLLLSMLGAVLW). At 205-224 (VNRPQRSSRSRQNWPKGENQ) the chain is on the cytoplasmic side.

The protein belongs to the CD300 family. In terms of tissue distribution, present on the surface of monocytes, neutrophils, a proportion of peripheral blood T- and B-lymphocytes and lymphocytic cell lines.

It is found in the cell membrane. This chain is CMRF35-like molecule 6 (CD300C), found in Homo sapiens (Human).